The following is a 408-amino-acid chain: Aminoacylase-1 (408 aa).

Residue H80 coordinates Zn(2+). Residue D82 is part of the active site. A Zn(2+)-binding site is contributed by D113. Catalysis depends on E147, which acts as the Proton acceptor. 3 residues coordinate Zn(2+): E148, E175, and H373.

This sequence belongs to the peptidase M20A family. In terms of assembly, homodimer. Interacts with SPHK1. It depends on Zn(2+) as a cofactor. In terms of tissue distribution, expression is highest in kidney, strong in brain and weaker in placenta and spleen.

Its subcellular location is the cytoplasm. The catalysed reaction is an N-acyl-L-amino acid + H2O = an L-alpha-amino acid + a carboxylate. It carries out the reaction N-acetyl-L-methionine + H2O = L-methionine + acetate. It catalyses the reaction N-acetyl-L-glutamine + H2O = L-glutamine + acetate. Catalyzes the hydrolysis of N-acetylated amino acids to acetate and free amino acids. This Homo sapiens (Human) protein is Aminoacylase-1 (ACY1).